The following is a 557-amino-acid chain: Formate--tetrahydrofolate ligase (557 aa).

66-73 (TPAGEGKS) lines the ATP pocket.

It belongs to the formate--tetrahydrofolate ligase family.

The catalysed reaction is (6S)-5,6,7,8-tetrahydrofolate + formate + ATP = (6R)-10-formyltetrahydrofolate + ADP + phosphate. It functions in the pathway one-carbon metabolism; tetrahydrofolate interconversion. This Clostridium botulinum (strain Okra / Type B1) protein is Formate--tetrahydrofolate ligase.